Consider the following 526-residue polypeptide: Probable carboxypeptidase 2 (526 aa).

The first 21 residues, 1–21 (MVAYRLLALISLGLGSHCASA), serve as a signal peptide directing secretion. Asn-46 is a glycosylation site (N-linked (GlcNAc...) asparagine). Residues 53–76 (PAFTSPGTVPRGFSDGTSGPTRDE) are disordered. The 281-residue stretch at 71 to 351 (GPTRDETMEG…VMAKSILQTA (281 aa)) folds into the Peptidase M14 domain. N-linked (GlcNAc...) asparagine glycosylation is present at Asn-116. Residues His-136, Glu-139, and His-224 each contribute to the Zn(2+) site. Glu-322 acts as the Proton donor/acceptor in catalysis. Residues Asn-393 and Asn-459 are each glycosylated (N-linked (GlcNAc...) asparagine).

The protein belongs to the peptidase M14 family. Zn(2+) serves as cofactor.

The protein localises to the secreted. Functionally, extracellular metalloprotease that contributes to pathogenicity. The sequence is that of Probable carboxypeptidase 2 (MCPB) from Arthroderma benhamiae (strain ATCC MYA-4681 / CBS 112371) (Trichophyton mentagrophytes).